Reading from the N-terminus, the 681-residue chain is Envelope glycoprotein (681 aa).

A signal peptide spans 1-18 (MKTTCLFISLILIQGIKT). Residues 19 to 648 (LPILEIASNN…GLGGKWWTSD (630 aa)) lie on the Extracellular side of the membrane. The receptor-binding stretch occupies residues 38-188 (SGTLQKTEDV…FSRQGQGYRH (151 aa)). N-linked (GlcNAc...) asparagine; by host glycans are attached at residues asparagine 94, asparagine 171, asparagine 190, asparagine 202, asparagine 207, asparagine 219, asparagine 223, and asparagine 255. The segment at 223–351 (NQTCAPSKIP…STNNTSKNNF (129 aa)) is disordered. A compositionally biased stretch (low complexity) spans 244 to 259 (PTSTPTDATTLNTTDP). Residues 277–455 (EPYTTSDAVT…PFLDGLINAP (179 aa)) form a mucin-like region region. Polar residues-rich tracts occupy residues 278 to 290 (PYTT…KQGL) and 308 to 341 (EGNN…TTAI). Asparagine 310, asparagine 323, asparagine 326, asparagine 337, asparagine 344, asparagine 345, asparagine 350, asparagine 360, asparagine 389, asparagine 397, asparagine 408, and asparagine 487 each carry an N-linked (GlcNAc...) asparagine; by host glycan. Low complexity predominate over residues 342–351 (STNNTSKNNF). Positions 366 to 414 (TQSTATENEQTSAPSKTTLPPTGNLTTAKSTNNTKGPTTTAPNMTNGHL) are enriched in polar residues. The segment at 366–425 (TQSTATENEQTSAPSKTTLPPTGNLTTAKSTNNTKGPTTTAPNMTNGHLTSPSPTPNPTT) is disordered. The segment at 529 to 549 (GLSWIPFFGPGIEGLYTAGLI) is fusion peptide. Residues asparagine 564 and asparagine 619 are each glycosylated (N-linked (GlcNAc...) asparagine; by host). Residues 649–669 (WGVLTNLGILLLLSIAVLIAL) form a helical membrane-spanning segment. Residues 670 to 681 (SCICRIFTKYIG) lie on the Cytoplasmic side of the membrane. 2 S-palmitoyl cysteine; by host lipidation sites follow: cysteine 671 and cysteine 673.

This sequence belongs to the filoviruses glycoprotein family. As to quaternary structure, homotrimer; each monomer consists of a GP1 and a GP2 subunit linked by disulfide bonds. The resulting peplomers (GP1,2) protrude from the virus surface as spikes. GP1,2 interacts with human CD209 and CLEC4M (collectively referred to as DC-SIGN(R)). Asialoglycoprotein receptor (ASGP-R) may be a liver-specific receptor for GP1,2. Members of the Tyro3 receptor tyrosine kinase family may be cell entry factors interacting with GP1,2. N-glycosylated. Post-translationally, O-glycosylated in the mucin-like region. In terms of processing, specific enzymatic cleavages in vivo yield mature proteins. The precursor is processed into GP1 and GP2 by host cell furin in the trans Golgi, and maybe by other host proteases, to yield the mature GP1 and GP2 proteins. The cleavage site corresponds to the furin optimal cleavage sequence [KR]-X-[KR]-R. GP1 is phosphorylated on serine residues between residues 260 and 273.

It is found in the virion membrane. It localises to the host cell membrane. Its function is as follows. GP1 is responsible for binding to the receptor(s) on target cells. Interacts with CD209/DC-SIGN and CLEC4M/DC-SIGNR which act as cofactors for virus entry into the host cell. Binding to CD209 and CLEC4M, which are respectively found on dendritic cells (DCs), and on endothelial cells of liver sinusoids and lymph node sinuses, facilitate infection of macrophages and endothelial cells. These interactions not only facilitate virus cell entry, but also allow capture of viral particles by DCs and subsequent transmission to susceptible cells without DCs infection (trans infection). In terms of biological role, GP2 acts as a class I viral fusion protein. Under the current model, the protein has at least 3 conformational states: pre-fusion native state, pre-hairpin intermediate state, and post-fusion hairpin state. During viral and target cell membrane fusion, the coiled coil regions (heptad repeats) assume a trimer-of-hairpins structure, positioning the fusion peptide in close proximity to the C-terminal region of the ectodomain. The formation of this structure appears to drive apposition and subsequent fusion of viral and target cell membranes. Responsible for penetration of the virus into the cell cytoplasm by mediating the fusion of the membrane of the endocytosed virus particle with the endosomal membrane. Low pH in endosomes induces an irreversible conformational change in GP2, releasing the fusion hydrophobic peptide. The chain is Envelope glycoprotein (GP) from Lake Victoria marburgvirus (strain Popp-67) (MARV).